The chain runs to 117 residues: Large ribosomal subunit protein bL19 (117 aa).

The protein belongs to the bacterial ribosomal protein bL19 family.

Functionally, this protein is located at the 30S-50S ribosomal subunit interface and may play a role in the structure and function of the aminoacyl-tRNA binding site. This is Large ribosomal subunit protein bL19 from Cutibacterium acnes (strain DSM 16379 / KPA171202) (Propionibacterium acnes).